A 143-amino-acid polypeptide reads, in one-letter code: Large ribosomal subunit protein uL11 (143 aa).

The protein belongs to the universal ribosomal protein uL11 family. As to quaternary structure, part of the ribosomal stalk of the 50S ribosomal subunit. Interacts with L10 and the large rRNA to form the base of the stalk. L10 forms an elongated spine to which L12 dimers bind in a sequential fashion forming a multimeric L10(L12)X complex. One or more lysine residues are methylated.

Forms part of the ribosomal stalk which helps the ribosome interact with GTP-bound translation factors. The sequence is that of Large ribosomal subunit protein uL11 from Chromohalobacter salexigens (strain ATCC BAA-138 / DSM 3043 / CIP 106854 / NCIMB 13768 / 1H11).